A 1588-amino-acid chain; its full sequence is Centrosomal protein of 170 kDa (1588 aa).

In terms of domain architecture, FHA spans 23–73 (IFVGRDDCELMLQSRSVDKQHAVINYDASMDEHLVKDLGSLNGTFVNDVRI). Disordered stretches follow at residues 121–172 (LSQK…MPRG), 299–323 (KFTSDQRHKSKKASPGTQDLPGIQT), 338–447 (QNNP…EEPS), and 461–508 (SGSL…NPNS). The residue at position 141 (S141) is a Phosphoserine. Basic and acidic residues predominate over residues 155–164 (EALKSEEKPM). The span at 347–357 (ERTEEDSKSIK) shows a compositional bias: basic and acidic residues. A phosphoserine mark is found at S355 and S358. The residue at position 363 (Y363) is a Phosphotyrosine. Over residues 407-418 (KKKAQSTEKHQE) the composition is skewed to basic and acidic residues. Residues S443, S463, and S494 each carry the phosphoserine modification. T498 is subject to Phosphothreonine. A phosphoserine mark is found at S568, S577, S628, and S631. The disordered stretch occupies residues 602 to 854 (ELSATVENET…PHINKQNSSV (253 aa)). Positions 620-631 (LRSTSCTTSLAS) are enriched in polar residues. Position 639 is a phosphothreonine (T639). A compositionally biased stretch (basic and acidic residues) spans 645-654 (NEEKLLESSR). Residue S662 is modified to Phosphoserine. The segment covering 663 to 691 (EIGEKQDTELQEKEAQVYQSEKHDADRGL) has biased composition (basic and acidic residues). A Phosphoserine modification is found at S718. The span at 720 to 731 (SKEKSETEKETS) shows a compositional bias: basic and acidic residues. T752 is subject to Phosphothreonine. 2 stretches are compositionally biased toward basic and acidic residues: residues 764-774 (HIDKCREESSK) and 789-821 (SKGDRVIQNESKRRKAEEIPKCQASKGDKKESS). Residues 822 to 839 (KSLVRQGSFTIDKPSSNI) are compositionally biased toward polar residues. Phosphoserine is present on residues S829, S870, and S872. Residues 844-1588 (IPHINKQNSS…GEEEDVTVHE (745 aa)) form a targeting to microtubules region. Over residues 899 to 908 (LREDNNKTDE) the composition is skewed to basic and acidic residues. 2 disordered regions span residues 899-1222 (LRED…RWRR) and 1228-1247 (ASTSEDEFGSNRNSPKHTRL). 2 positions are modified to phosphothreonine: T906 and T912. Over residues 913–937 (PSYNRDNSISPESDVDTASTISLVT) the composition is skewed to polar residues. 3 positions are modified to phosphoserine: S922, S925, and S950. The segment covering 967–980 (DVTKSGSREKIEKK) has biased composition (basic and acidic residues). S1008 bears the Phosphoserine mark. Phosphothreonine is present on T1012. Over residues 1028 to 1038 (IMSSDQETYSC) the composition is skewed to polar residues. T1047 carries the post-translational modification Phosphothreonine. S1048 carries the post-translational modification Phosphoserine. Positions 1049–1062 (ADEHNIHSKLEGGK) are enriched in basic and acidic residues. A compositionally biased stretch (low complexity) spans 1075–1093 (STSKSTTLPRPRPTRTSLL). 7 positions are modified to phosphoserine: S1102, S1104, S1122, S1123, S1135, S1150, and S1155. The segment at 1103 to 1588 (DSELADADKA…GEEEDVTVHE (486 aa)) is targeting to centrosomes. Residues 1112–1128 (ASVASEVSTTSSTSKPP) show a composition bias toward low complexity. The segment covering 1158-1173 (EATISRSSASARTAEA) has biased composition (low complexity). Residues S1188, S1195, S1200, S1229, S1231, S1241, S1260, and S1270 each carry the phosphoserine modification. Residues 1191-1218 (TRANSISRLSDSKVKSMSSTHGSPSVNS) show a composition bias toward polar residues. The disordered stretch occupies residues 1315-1334 (SVTSSGTAPSTTVSTAATTP). S1362 carries the post-translational modification Phosphoserine. The tract at residues 1370-1398 (PLVHSKTPEGNNGRSVDSRPQPAEHPDHL) is disordered. Residues 1467-1495 (KTSSMEISSILQELKRVEKQLQVINAMID) adopt a coiled-coil conformation. Residues 1511–1540 (AILPSPPKQKSSPVNNHSSPSQTPALCPPE) are disordered. Polar residues predominate over residues 1518–1534 (KQKSSPVNNHSSPSQTP). Phosphoserine occurs at positions 1521 and 1522.

The protein belongs to the CEP170 family. In terms of assembly, interacts with CCDC68 and CCDC120; leading to recruitment to centrosomes. Interacts with PLK1. Interacts with NIN. Interacts with FHDC1. Interacts with CCDC61. Interacts with TBK1; efficient complex formation may be dependent on the presence of CCDC61. Post-translationally, phosphorylated; probably by PLK1.

The protein resides in the cytoplasm. The protein localises to the cytoskeleton. It localises to the microtubule organizing center. It is found in the centrosome. Its subcellular location is the centriole. The protein resides in the spindle. Plays a role in microtubule organization. Required for centriole subdistal appendage assembly. The protein is Centrosomal protein of 170 kDa (Cep170) of Mus musculus (Mouse).